Consider the following 301-residue polypeptide: Syntaxin-17 (301 aa).

Ser-2 carries the post-translational modification N-acetylserine. At 2–227 (SEDEEKVKLR…KNLQKAAKYK (226 aa)) the chain is on the cytoplasmic side. Lys-41 carries the N6-acetyllysine modification. A coiled-coil region spans residues 49–128 (DKLHEEHINA…QVKNEEALLQ (80 aa)). Residue Tyr-156 is modified to Phosphotyrosine; by ABL1. The region spanning 161 to 223 (IPRDQNAAES…EEGTKNLQKA (63 aa)) is the t-SNARE coiled-coil homology domain. A helical membrane pass occupies residues 228 to 248 (LAALPVAGAVIGGVVGGPIGL). A necessary and sufficient for localization to autophagosome region spans residues 228–274 (LAALPVAGAVIGGVVGGPIGLLAGFKVAGIAAALGGGVLGFTGGKLI). At 249–253 (LAGFK) the chain is on the lumenal side. A helical transmembrane segment spans residues 254–274 (VAGIAAALGGGVLGFTGGKLI). The required for interaction with COPB1, TMED9 and TMED10 stretch occupies residues 273 to 301 (LIQRRKQKMMEKLTSSCPDLPSQSDKKCS). Residues 275 to 301 (QRRKQKMMEKLTSSCPDLPSQSDKKCS) are Cytoplasmic-facing. Phosphoserine is present on Ser-288. The Endoplasmic reticulum retention signal signature appears at 298 to 301 (KKCS).

The protein belongs to the syntaxin family. Forms a SNARE complex composed of VAMP8, SNAP29 and STX17 involved in fusion of autophagosome with lysosome. May interact with VAMP7. May interact with VTI1B. Probably interacts with BET1, SCFD1 and SEC22B. Interacts with PTPN2 and ABL1; involved in STX17 phosphorylation. Interacts with COPB1. Interacts with TMED9 and TMED10; the interaction is direct. Interacts with RUBCNL/PACER; promoting targeting of RUBCNL/PACER to autophagosome. Interacts with VAMP8, SNAP29, VPS39 and VPS41; these interactions are increased in the absence of TMEM39A. Interacts with IRGM; promoting STX17 recruitment to autophagosomes. Interacts with ATG8 proteins GABARAP and MAP1LC3B. Interacts with RNF115; this interaction enhances STX17 stability which in turn promotes autophagosome maturation. Interacts with RAB39A (GTP-bound); the interaction promotes autophagosome-lysosome membrane fusion driven by STX17-SNAP29-VAMP8. Interacts with RAB39B; the interaction may promote a different fonction in autophagy as compared with RAB39A. Phosphorylated at Tyr-156 probably by ABL1. Dephosphorylation by PTPN2; regulates exit from the endoplasmic reticulum. As to expression, detected in all tissues examined with higher expression in steroidogenic tissues including testis and adrenal gland (at protein level). Highly expressed in liver and testis. Also found in brain, heart, kidney, lung, placenta, skeletal muscle and spleen.

It is found in the endoplasmic reticulum membrane. Its subcellular location is the smooth endoplasmic reticulum membrane. It localises to the endoplasmic reticulum-Golgi intermediate compartment membrane. The protein resides in the cytoplasmic vesicle. The protein localises to the autophagosome membrane. It is found in the COPII-coated vesicle membrane. Its subcellular location is the cytoplasm. It localises to the cytosol. The protein resides in the mitochondrion membrane. The protein localises to the autolysosome membrane. Functionally, SNAREs, soluble N-ethylmaleimide-sensitive factor-attachment protein receptors, are essential proteins for fusion of cellular membranes. SNAREs localized on opposing membranes assemble to form a trans-SNARE complex, an extended, parallel four alpha-helical bundle that drives membrane fusion. STX17 is a SNARE of the autophagosome involved in autophagy through the direct control of autophagosome membrane fusion with the lysosome membrane. May also play a role in the early secretory pathway where it may maintain the architecture of the endoplasmic reticulum-Golgi intermediate compartment/ERGIC and Golgi and/or regulate transport between the endoplasmic reticulum, the ERGIC and the Golgi. The polypeptide is Syntaxin-17 (Rattus norvegicus (Rat)).